We begin with the raw amino-acid sequence, 836 residues long: Protein O-mannosyl-transferase TMTC2 (836 aa).

Residues 1–21 (MIAELVSSALGLALYLNTLSA) form a helical membrane-spanning segment. Topologically, residues 22–84 (DFCYDDSRAI…LNHAIGGLNP (63 aa)) are extracellular. A helical membrane pass occupies residues 85–105 (WSYHLVNVLLHAAVTGLFTSF). Topologically, residues 106–107 (SK) are cytoplasmic. Residues 108 to 128 (ILLGDGYWTFMAGLMFASHPI) traverse the membrane as a helical segment. Over 129–132 (HTEA) the chain is Extracellular. A helical membrane pass occupies residues 133 to 153 (VAGIVGRADVGASLFFLLSLL). Residues 154–162 (CYIKHCSTR) lie on the Cytoplasmic side of the membrane. The next 2 membrane-spanning stretches (helical) occupy residues 163–184 (GYSA…CSML) and 185–204 (WKEQ…VFVF). The Cytoplasmic segment spans residues 205 to 220 (HRLKIKQILPTIYKRK). Residues 221–241 (NLSLFLSISLLIFWGSSLLGA) form a helical membrane-spanning segment. The Extracellular portion of the chain corresponds to 242 to 312 (RLYWMGNKPP…KTVCDWRNLH (71 aa)). Residues 313 to 333 (TVAFYTGLLLLAYYGLKSPSV) form a helical membrane-spanning segment. Residues 334–399 (DRECNGKTVT…TENIVVLSLS (66 aa)) lie on the Cytoplasmic side of the membrane. A helical transmembrane segment spans residues 400 to 420 (LLIIPFVPATNLFFYVGFVIA). The Extracellular segment spans residues 421–422 (ER). A helical membrane pass occupies residues 423–443 (VLYIPSMGFCLLITVGARALY). Residues 444–449 (VKVQKR) lie on the Cytoplasmic side of the membrane. A helical transmembrane segment spans residues 450–470 (FLKSLIFYATATLIVFYGLKT). The Extracellular segment spans residues 471–836 (AIRNGDWQNE…EKQGLKTSKT (366 aa)). 9 TPR repeats span residues 493-526 (AKAW…RSNM), 527-560 (ADML…RPTL), 561-594 (ASAY…PDEN), 606-639 (TSCL…MPRQ), 643-676 (QSLY…KTDH), 677-710 (IPAH…DPTK), 711-744 (GNCY…DSTE), 745-778 (FDVV…RPNY), and 779-812 (PAAL…KPDD).

It belongs to the TMTC family.

It localises to the membrane. The protein localises to the endoplasmic reticulum. It carries out the reaction a di-trans,poly-cis-dolichyl beta-D-mannosyl phosphate + L-seryl-[protein] = 3-O-(alpha-D-mannosyl)-L-seryl-[protein] + a di-trans,poly-cis-dolichyl phosphate + H(+). It catalyses the reaction a di-trans,poly-cis-dolichyl beta-D-mannosyl phosphate + L-threonyl-[protein] = 3-O-(alpha-D-mannosyl)-L-threonyl-[protein] + a di-trans,poly-cis-dolichyl phosphate + H(+). It functions in the pathway protein modification; protein glycosylation. Functionally, transfers mannosyl residues to the hydroxyl group of serine or threonine residues. The 4 members of the TMTC family are O-mannosyl-transferases dedicated primarily to the cadherin superfamily, each member seems to have a distinct role in decorating the cadherin domains with O-linked mannose glycans at specific regions. Also acts as O-mannosyl-transferase on other proteins such as PDIA3. In Homo sapiens (Human), this protein is Protein O-mannosyl-transferase TMTC2.